The following is a 49-amino-acid chain: Large ribosomal subunit protein bL33A (49 aa).

Belongs to the bacterial ribosomal protein bL33 family.

In Bacillus licheniformis (strain ATCC 14580 / DSM 13 / JCM 2505 / CCUG 7422 / NBRC 12200 / NCIMB 9375 / NCTC 10341 / NRRL NRS-1264 / Gibson 46), this protein is Large ribosomal subunit protein bL33A.